The chain runs to 286 residues: 4-hydroxy-3-methylbut-2-enyl diphosphate reductase (286 aa).

Position 12 (C12) interacts with [4Fe-4S] cluster. 2 residues coordinate (2E)-4-hydroxy-3-methylbut-2-enyl diphosphate: H47 and H80. Dimethylallyl diphosphate is bound by residues H47 and H80. Isopentenyl diphosphate contacts are provided by H47 and H80. C102 is a binding site for [4Fe-4S] cluster. H130 lines the (2E)-4-hydroxy-3-methylbut-2-enyl diphosphate pocket. H130 is a dimethylallyl diphosphate binding site. Position 130 (H130) interacts with isopentenyl diphosphate. The Proton donor role is filled by E132. T170 is a binding site for (2E)-4-hydroxy-3-methylbut-2-enyl diphosphate. A [4Fe-4S] cluster-binding site is contributed by C198. (2E)-4-hydroxy-3-methylbut-2-enyl diphosphate contacts are provided by S226, N228, and S270. The dimethylallyl diphosphate site is built by S226, N228, and S270. 3 residues coordinate isopentenyl diphosphate: S226, N228, and S270.

The protein belongs to the IspH family. The cofactor is [4Fe-4S] cluster.

It catalyses the reaction isopentenyl diphosphate + 2 oxidized [2Fe-2S]-[ferredoxin] + H2O = (2E)-4-hydroxy-3-methylbut-2-enyl diphosphate + 2 reduced [2Fe-2S]-[ferredoxin] + 2 H(+). The enzyme catalyses dimethylallyl diphosphate + 2 oxidized [2Fe-2S]-[ferredoxin] + H2O = (2E)-4-hydroxy-3-methylbut-2-enyl diphosphate + 2 reduced [2Fe-2S]-[ferredoxin] + 2 H(+). Its pathway is isoprenoid biosynthesis; dimethylallyl diphosphate biosynthesis; dimethylallyl diphosphate from (2E)-4-hydroxy-3-methylbutenyl diphosphate: step 1/1. It participates in isoprenoid biosynthesis; isopentenyl diphosphate biosynthesis via DXP pathway; isopentenyl diphosphate from 1-deoxy-D-xylulose 5-phosphate: step 6/6. Catalyzes the conversion of 1-hydroxy-2-methyl-2-(E)-butenyl 4-diphosphate (HMBPP) into a mixture of isopentenyl diphosphate (IPP) and dimethylallyl diphosphate (DMAPP). Acts in the terminal step of the DOXP/MEP pathway for isoprenoid precursor biosynthesis. This chain is 4-hydroxy-3-methylbut-2-enyl diphosphate reductase, found in Desulfovibrio desulfuricans (strain ATCC 27774 / DSM 6949 / MB).